The primary structure comprises 532 residues: Cytochrome P450 12b1, mitochondrial (532 aa).

Cysteine 480 serves as a coordination point for heme.

Belongs to the cytochrome P450 family. Requires heme as cofactor.

Its subcellular location is the mitochondrion. Its function is as follows. Probably involved in steroid hormones biosynthesis. This Drosophila acanthoptera (Fruit fly) protein is Cytochrome P450 12b1, mitochondrial (Cyp12b1).